Consider the following 512-residue polypeptide: Norfluorocurarine oxidase (512 aa).

Residues 3–23 form a helical membrane-spanning segment; sequence LLLNPSLFSLLPLLLFIIFLF. C453 is a heme binding site.

It belongs to the cytochrome P450 family. Requires heme as cofactor.

It is found in the membrane. It carries out the reaction norfluorocurarine + reduced [NADPH--hemoprotein reductase] + O2 = 18-hydroxynorfluorocurarine + oxidized [NADPH--hemoprotein reductase] + H2O + H(+). It participates in alkaloid biosynthesis. Functionally, monooxygenase involved in the biosynthesis of curare monoterpene indole alkaloids (MIAs), natural products such as diaboline, a pharmacologically active compound used to regulate blood pressure. Curare alkaloids act as animal glycine receptor antagonists. Catalyzes the conversion of norfluorocurarine to 18-OH norfluorocurarine. The sequence is that of Norfluorocurarine oxidase from Strychnos sp.